The sequence spans 237 residues: Protein PetR (237 aa).

The 114-residue stretch at 8-121 (HLLIVDDDER…ELLLRINAIL (114 aa)) folds into the Response regulatory domain. D57 bears the 4-aspartylphosphate mark. The segment at residues 77-95 (ATPILLLTARGETRERIEG) is a DNA-binding region (H-T-H motif). Positions 132–236 (PKYLSLGPLR…VRGLGYMLAP (105 aa)) form a DNA-binding region, ompR/PhoB-type.

Its function is as follows. Necessary for photosynthetic and respiratory growth. Probable promoter-specific protein mediating the interaction between DNA and RNA polymerase. The polypeptide is Protein PetR (petR) (Rhodobacter capsulatus (strain ATCC BAA-309 / NBRC 16581 / SB1003)).